A 388-amino-acid polypeptide reads, in one-letter code: Chaperone protein DnaJ 1 (388 aa).

Positions 10–74 (DFYKELGVSS…VKRKEYDETR (65 aa)) constitute a J domain. Residues 159 to 237 (GVAMPLRLTS…CKGTGVTTRT (79 aa)) form a CR-type zinc finger. Residues cysteine 172, cysteine 175, cysteine 189, cysteine 192, cysteine 211, cysteine 214, cysteine 225, and cysteine 228 each coordinate Zn(2+). CXXCXGXG motif repeat units follow at residues 172 to 179 (CTNCHGSG), 189 to 196 (CSTCNGSG), 211 to 218 (CTECRGSG), and 225 to 232 (CEECKGTG).

The protein belongs to the DnaJ family. As to quaternary structure, homodimer. Requires Zn(2+) as cofactor.

The protein resides in the cytoplasm. Its function is as follows. Participates actively in the response to hyperosmotic and heat shock by preventing the aggregation of stress-denatured proteins and by disaggregating proteins, also in an autonomous, DnaK-independent fashion. Unfolded proteins bind initially to DnaJ; upon interaction with the DnaJ-bound protein, DnaK hydrolyzes its bound ATP, resulting in the formation of a stable complex. GrpE releases ADP from DnaK; ATP binding to DnaK triggers the release of the substrate protein, thus completing the reaction cycle. Several rounds of ATP-dependent interactions between DnaJ, DnaK and GrpE are required for fully efficient folding. Also involved, together with DnaK and GrpE, in the DNA replication of plasmids through activation of initiation proteins. This chain is Chaperone protein DnaJ 1, found in Mycobacterium leprae (strain TN).